The chain runs to 175 residues: MLENPLIQQVLFEIMDEDVVGFDVLSVLINTNEVTDDEISRQLDVKLNNIRRILYKLYEARLVDYNREKDEETNWYTYTWKPSLEKVPALVAKKMKNVLNGLKEQLNVEENNMFFFCSDCEIKFTFEDAMDSGFRCPQCGEMMYEYDNKKDISLLKEQIKYLEDEFNKNPLFSTY.

Residues 3–88 enclose the HTH TFE/IIEalpha-type domain; that stretch reads ENPLIQQVLF…TWKPSLEKVP (86 aa).

Belongs to the TFE family. In terms of assembly, monomer. Interaction with RNA polymerase subunits RpoF and RpoE is necessary for Tfe stimulatory transcription activity. Able to interact with Tbp and RNA polymerase in the absence of DNA promoter. Interacts both with the preinitiation and elongation complexes.

In terms of biological role, transcription factor that plays a role in the activation of archaeal genes transcribed by RNA polymerase. Facilitates transcription initiation by enhancing TATA-box recognition by TATA-box-binding protein (Tbp), and transcription factor B (Tfb) and RNA polymerase recruitment. Not absolutely required for transcription in vitro, but particularly important in cases where Tbp or Tfb function is not optimal. It dynamically alters the nucleic acid-binding properties of RNA polymerases by stabilizing the initiation complex and destabilizing elongation complexes. Seems to translocate with the RNA polymerase following initiation and acts by binding to the non template strand of the transcription bubble in elongation complexes. This is Transcription factor E from Methanococcus maripaludis (strain DSM 14266 / JCM 13030 / NBRC 101832 / S2 / LL).